Here is a 315-residue protein sequence, read N- to C-terminus: MSERDDGLGLSLSLSLGFNQKDPSSRLNPMPLASYASSSHMQHMQQSNYNHPQKIQNTWINMFQSSERNSDMRSFLRGIDVNRAPSTVVVDVEDEGAGVSSPNSTVSSVMSGKKSERELMAAAGAVGGGRVEDNEIERASCSLGGGSDDEDGSGNGDDSSRKKLRLSKEQALVLEETFKEHSTLNPKQKMALAKQLNLRTRQVEVWFQNRRARTKLKQTEVDCEYLKRCCENLTDENRRLQKEVSELRALKLSPHLYMHMKPPTTLTMCPSCERVAVTSSSSSVAPPVMNSSSPMGPMSPWAAMPLRQRPAAGSH.

Positions serine 140–lysine 163 are disordered. Residues serine 159 to glutamine 218 constitute a DNA-binding region (homeobox). The tract at residues leucine 226–leucine 247 is leucine-zipper. Residues serine 280–proline 305 show a composition bias toward low complexity. The tract at residues serine 280 to histidine 315 is disordered.

It belongs to the HD-ZIP homeobox family. Class II subfamily.

It is found in the nucleus. Functionally, probable transcription factor. This chain is Homeobox-leucine zipper protein HAT3 (HAT3), found in Arabidopsis thaliana (Mouse-ear cress).